Consider the following 143-residue polypeptide: Immunity protein CdiI (143 aa).

As to quaternary structure, interacts with cognate CdiA-CT but not non-cognate CdiA-CT from E.coli strain 536 / UPEC.

Its function is as follows. Immunity protein component of a toxin-immunity protein module, which functions as a cellular contact-dependent growth inhibition (CDI) system. CDI modules allow bacteria to communicate with and inhibit the growth of closely related neighboring bacteria in a contact-dependent fashion. Protects cells against the DNase activity of CdiA, its cognate toxin protein, but not against non-cognate CdiA from E.coli strain 536 / UPEC. The sequence is that of Immunity protein CdiI (cdiI) from Dickeya dadantii (strain 3937) (Erwinia chrysanthemi (strain 3937)).